A 299-amino-acid polypeptide reads, in one-letter code: Probable lipid kinase YegS (299 aa).

The 132-residue stretch at 2 to 133 (ANFPASLLIL…IDMARVNDKT (132 aa)) folds into the DAGKc domain. ATP-binding positions include T40, 66–72 (GDGTINE), and T95. Mg(2+)-binding residues include L215, D218, and L220. E271 functions as the Proton acceptor in the catalytic mechanism.

Belongs to the diacylglycerol/lipid kinase family. YegS lipid kinase subfamily. Mg(2+) serves as cofactor. Ca(2+) is required as a cofactor.

The protein localises to the cytoplasm. Functionally, probably phosphorylates lipids; the in vivo substrate is unknown. The polypeptide is Probable lipid kinase YegS (Salmonella paratyphi A (strain ATCC 9150 / SARB42)).